Reading from the N-terminus, the 1260-residue chain is UPF0507 protein LELG_01076 (1260 aa).

The VPS9 domain occupies 336–493 (ADYDPSATKV…LSDNDKGLNT (158 aa)).

It belongs to the UPF0507 family.

This chain is UPF0507 protein LELG_01076, found in Lodderomyces elongisporus (strain ATCC 11503 / CBS 2605 / JCM 1781 / NBRC 1676 / NRRL YB-4239) (Yeast).